We begin with the raw amino-acid sequence, 102 residues long: UPF0235 protein msl4154 (102 aa).

Belongs to the UPF0235 family.

In Mesorhizobium japonicum (strain LMG 29417 / CECT 9101 / MAFF 303099) (Mesorhizobium loti (strain MAFF 303099)), this protein is UPF0235 protein msl4154.